Consider the following 207-residue polypeptide: Large ribosomal subunit protein uL4 (207 aa).

A disordered region spans residues 58–78 (AGGGKKPWRQKGTGRARHGSI). Over residues 63–77 (KPWRQKGTGRARHGS) the composition is skewed to basic residues.

This sequence belongs to the universal ribosomal protein uL4 family. As to quaternary structure, part of the 50S ribosomal subunit.

In terms of biological role, one of the primary rRNA binding proteins, this protein initially binds near the 5'-end of the 23S rRNA. It is important during the early stages of 50S assembly. It makes multiple contacts with different domains of the 23S rRNA in the assembled 50S subunit and ribosome. Forms part of the polypeptide exit tunnel. This Aster yellows witches'-broom phytoplasma (strain AYWB) protein is Large ribosomal subunit protein uL4.